We begin with the raw amino-acid sequence, 272 residues long: Cell division protein FtsQ (272 aa).

At 1–43 the chain is on the cytoplasmic side; it reads MEYNPPNTRERIVARRQRMRRNSTEPVVPGWRWRLREGLRSGR. Residues 44–64 form a helical membrane-spanning segment; sequence IVSGIVFVISCFALFYVLFSS. Residues 65-272 lie on the Extracellular side of the membrane; it reads RFRVQTVEVV…FYQYRPDGSS (208 aa). A POTRA domain is found at 66–133; it reads FRVQTVEVVG…DRARIVIVER (68 aa).

It belongs to the FtsQ/DivIB family. FtsQ subfamily.

The protein localises to the cell membrane. Essential cell division protein. This is Cell division protein FtsQ from Chloroflexus aurantiacus (strain ATCC 29366 / DSM 635 / J-10-fl).